A 503-amino-acid polypeptide reads, in one-letter code: Aromatase (503 aa).

Helical transmembrane passes span 19 to 39 (EAMP…LLVW) and 303 to 323 (MLIA…FLIA). Substrate is bound by residues Asp-309 and Met-374. Residue Cys-437 participates in heme binding.

The protein belongs to the cytochrome P450 family. Heme is required as a cofactor. Post-translationally, phosphorylated in vitro by PKA and PKG/PRKG1. These phosphorylations inhibit the catalytic activity as measured by estrone synthesis from androstenedione (36% decrease for PKA and 30% for PKG/PRKG1). In terms of tissue distribution, widely expressed, including in adult and fetal brain, placenta, skin fibroblasts, adipose tissue and gonads.

The protein localises to the endoplasmic reticulum membrane. The protein resides in the microsome membrane. The catalysed reaction is testosterone + 3 reduced [NADPH--hemoprotein reductase] + 3 O2 = 17beta-estradiol + formate + 3 oxidized [NADPH--hemoprotein reductase] + 4 H2O + 4 H(+). It carries out the reaction androst-4-ene-3,17-dione + 3 reduced [NADPH--hemoprotein reductase] + 3 O2 = estrone + formate + 3 oxidized [NADPH--hemoprotein reductase] + 4 H2O + 4 H(+). It catalyses the reaction androst-4-ene-3,17-dione + reduced [NADPH--hemoprotein reductase] + O2 = 19-hydroxyandrost-4-ene-3,17-dione + oxidized [NADPH--hemoprotein reductase] + H2O + H(+). The enzyme catalyses 19-hydroxyandrost-4-ene-3,17-dione + reduced [NADPH--hemoprotein reductase] + O2 = 19-oxo-androst-4-ene-3,17-dione + oxidized [NADPH--hemoprotein reductase] + 2 H2O + H(+). The catalysed reaction is 19-oxo-androst-4-ene-3,17-dione + reduced [NADPH--hemoprotein reductase] + O2 = estrone + formate + oxidized [NADPH--hemoprotein reductase] + H2O + 2 H(+). It carries out the reaction estrone + reduced [NADPH--hemoprotein reductase] + O2 = 2-hydroxyestrone + oxidized [NADPH--hemoprotein reductase] + H2O + H(+). It catalyses the reaction 17beta-hydroxy-5alpha-androstan-3-one + reduced [NADPH--hemoprotein reductase] + O2 = 17beta,19-dihydroxy-3-oxo-5alpha-androstanone + oxidized [NADPH--hemoprotein reductase] + H2O + H(+). The enzyme catalyses 17beta,19-dihydroxy-3-oxo-5alpha-androstanone + reduced [NADPH--hemoprotein reductase] + O2 = 17beta-hydroxy-3,19-dioxo-5alpha-androstanone + oxidized [NADPH--hemoprotein reductase] + 2 H2O + H(+). The catalysed reaction is 17beta-hydroxy-3,19-dioxo-5alpha-androstanone + reduced [NADPH--hemoprotein reductase] + O2 = 17beta-hydroxy-3-oxo-19-nor-5alpha-androst-1-ene + formate + oxidized [NADPH--hemoprotein reductase] + H2O + 2 H(+). The protein operates within steroid hormone biosynthesis. Its function is as follows. A cytochrome P450 monooxygenase that catalyzes the conversion of C19 androgens, androst-4-ene-3,17-dione (androstenedione) and testosterone to the C18 estrogens, estrone and estradiol, respectively. Catalyzes three successive oxidations of C19 androgens: two conventional oxidations at C19 yielding 19-hydroxy and 19-oxo/19-aldehyde derivatives, followed by a third oxidative aromatization step that involves C1-beta hydrogen abstraction combined with cleavage of the C10-C19 bond to yield a phenolic A ring and formic acid. Alternatively, the third oxidative reaction yields a 19-norsteroid and formic acid. Converts dihydrotestosterone to delta1,10-dehydro 19-nordihydrotestosterone and may play a role in homeostasis of this potent androgen. Also displays 2-hydroxylase activity toward estrone. Mechanistically, uses molecular oxygen inserting one oxygen atom into a substrate, and reducing the second into a water molecule, with two electrons provided by NADPH via cytochrome P450 reductase (CPR; NADPH-ferrihemoprotein reductase). This Homo sapiens (Human) protein is Aromatase.